A 555-amino-acid polypeptide reads, in one-letter code: Carboxylic ester hydrolase (555 aa).

The signal sequence occupies residues 1-19; it reads MELSVIALLLLGFVNFSWQ. Residues Cys-86 and Cys-107 are joined by a disulfide bond. N-linked (GlcNAc...) asparagine glycans are attached at residues Asn-120 and Asn-144. The Acyl-ester intermediate role is filled by Ser-211. Cys-263 and Cys-274 form a disulfide bridge. Glu-336 serves as the catalytic Charge relay system. Residues Asn-369 and Asn-397 are each glycosylated (N-linked (GlcNAc...) asparagine). Catalysis depends on His-459, which acts as the Charge relay system. Asn-473 and Asn-533 each carry an N-linked (GlcNAc...) asparagine glycan.

It belongs to the type-B carboxylesterase/lipase family. In terms of processing, N-glycosylated. As to expression, expressed in several tissues, including epidermis (at protein level), fat body (at protein level), gut (at protein level), muscle (at protein level), and venom gland (at protein level).

The protein localises to the secreted. The catalysed reaction is a carboxylic ester + H2O = an alcohol + a carboxylate + H(+). Its function is as follows. Lipolytic agent that may be involved in distributing the venom via degradation of blood triglycerides. The recombinant protein degrades triglycerides and exhibits high lipolytic activity toward long-chain triglycerides (tested on tributyrin, trioctanoin and triolein). Does not affect mammalian cells. The polypeptide is Carboxylic ester hydrolase (vCaE) (Bombus ignitus (Bumblebee)).